The following is a 609-amino-acid chain: UvrABC system protein C (609 aa).

Residues Ala-19–Val-97 form the GIY-YIG domain. The UVR domain maps to Glu-208 to Phe-243.

This sequence belongs to the UvrC family. As to quaternary structure, interacts with UvrB in an incision complex.

The protein localises to the cytoplasm. The UvrABC repair system catalyzes the recognition and processing of DNA lesions. UvrC both incises the 5' and 3' sides of the lesion. The N-terminal half is responsible for the 3' incision and the C-terminal half is responsible for the 5' incision. This chain is UvrABC system protein C, found in Leptospira interrogans serogroup Icterohaemorrhagiae serovar Lai (strain 56601).